Consider the following 170-residue polypeptide: uncharacterized protein (170 aa).

Transmembrane regions (helical) follow at residues 31–51 (ILAV…FYIF), 58–78 (LFLI…LLLF), and 133–153 (IDFI…MLLF).

It to M.jannaschii MJ0554 and MJ0587.

Its subcellular location is the cell membrane. This is an uncharacterized protein from Methanocaldococcus jannaschii (strain ATCC 43067 / DSM 2661 / JAL-1 / JCM 10045 / NBRC 100440) (Methanococcus jannaschii).